We begin with the raw amino-acid sequence, 287 residues long: Protein REVEILLE 3 (287 aa).

The HTH myb-type domain occupies 56–110; it reads TITKSRENWTEQEHDKFLEALHLFDRDWKKIKAFVGSKTVIQIRSHAQKYFLKVQ. The segment at residues 83–106 is a DNA-binding region (H-T-H motif); the sequence is WKKIKAFVGSKTVIQIRSHAQKYF. A disordered region spans residues 111 to 135; sequence KNGTKEHLPPPRPKRKANHPYPQKA.

It is found in the nucleus. In terms of biological role, probable transcription factor. The chain is Protein REVEILLE 3 (RVE3) from Arabidopsis thaliana (Mouse-ear cress).